A 212-amino-acid polypeptide reads, in one-letter code: Thymidylate kinase (212 aa).

Residue Ala-2 is modified to N-acetylalanine. Residues Arg-16–Thr-21 and Arg-97 contribute to the ATP site. Residues Leu-133–Gln-157 are LID. Lys-169 is modified (N6-acetyllysine). ATP is bound by residues Lys-182 and Arg-192.

Belongs to the thymidylate kinase family. As to quaternary structure, homodimer. It depends on Mg(2+) as a cofactor.

The enzyme catalyses dTMP + ATP = dTDP + ADP. Its pathway is pyrimidine metabolism; dTTP biosynthesis. Functionally, catalyzes the phosphorylation of thymidine monophosphate (dTMP) to thymidine diphosphate (dTDP), the immediate precursor for the DNA building block dTTP, with ATP as the preferred phosphoryl donor in the presence of Mg(2+). The sequence is that of Thymidylate kinase (DTYMK) from Homo sapiens (Human).